Reading from the N-terminus, the 283-residue chain is Thymidylate synthase (283 aa).

Arg-22 lines the dUMP pocket. Cys-160 (nucleophile) is an active-site residue. DUMP-binding positions include 180–183 (RSCD), Asn-191, and 221–223 (HIY). Asp-183 contacts (6R)-5,10-methylene-5,6,7,8-tetrahydrofolate. Position 282 (Ser-282) interacts with (6R)-5,10-methylene-5,6,7,8-tetrahydrofolate.

This sequence belongs to the thymidylate synthase family. Bacterial-type ThyA subfamily. In terms of assembly, homodimer.

It localises to the cytoplasm. It catalyses the reaction dUMP + (6R)-5,10-methylene-5,6,7,8-tetrahydrofolate = 7,8-dihydrofolate + dTMP. Its pathway is pyrimidine metabolism; dTTP biosynthesis. Functionally, catalyzes the reductive methylation of 2'-deoxyuridine-5'-monophosphate (dUMP) to 2'-deoxythymidine-5'-monophosphate (dTMP) while utilizing 5,10-methylenetetrahydrofolate (mTHF) as the methyl donor and reductant in the reaction, yielding dihydrofolate (DHF) as a by-product. This enzymatic reaction provides an intracellular de novo source of dTMP, an essential precursor for DNA biosynthesis. The sequence is that of Thymidylate synthase from Shewanella sediminis (strain HAW-EB3).